The following is a 146-amino-acid chain: Hemoglobin subunit beta-1 (146 aa).

Positions 2 to 146 (EWTDAEKSTI…VVAAMGSRYF (145 aa)) constitute a Globin domain. Heme b contacts are provided by His63 and His92.

The protein belongs to the globin family. As to quaternary structure, heterotetramer of two alpha chains and two beta chains. As to expression, red blood cells.

In terms of biological role, involved in oxygen transport from gills to the various peripheral tissues. This Oncorhynchus mykiss (Rainbow trout) protein is Hemoglobin subunit beta-1 (hbb1).